We begin with the raw amino-acid sequence, 115 residues long: V-type proton ATPase subunit G (115 aa).

Belongs to the V-ATPase G subunit family. In terms of assembly, V-ATPase is a heteromultimeric enzyme composed of a peripheral catalytic V1 complex (components A to H) attached to an integral membrane V0 proton pore complex (components: a, c, c', c'', d, e, f and VOA1).

It localises to the vacuole membrane. Functionally, subunit of the V1 complex of vacuolar(H+)-ATPase (V-ATPase), a multisubunit enzyme composed of a peripheral complex (V1) that hydrolyzes ATP and a membrane integral complex (V0) that translocates protons. V-ATPase is responsible for acidifying and maintaining the pH of intracellular compartments. The polypeptide is V-type proton ATPase subunit G (vma-10) (Neurospora crassa (strain ATCC 24698 / 74-OR23-1A / CBS 708.71 / DSM 1257 / FGSC 987)).